Consider the following 394-residue polypeptide: [Pyruvate dehydrogenase (acetyl-transferring)] kinase 1, mitochondrial (394 aa).

The transit peptide at 1–20 directs the protein to the mitochondrion; that stretch reads MWKIMRSWKCGGMRWAHRQR. Residues 126–386 enclose the Histidine kinase domain; that stretch reads AYPYELHNPP…DVYIKLKGPS (261 aa). Phosphohistidine; by autocatalysis is present on His-148. Residues 267-274, Asp-304, 323-324, and 347-352 each bind ATP; these read EVFKNAFE, ST, and GMGFGL.

It belongs to the PDK/BCKDK protein kinase family. In terms of assembly, interacts with PKP2.

It is found in the mitochondrion matrix. It catalyses the reaction L-seryl-[pyruvate dehydrogenase E1 alpha subunit] + ATP = O-phospho-L-seryl-[pyruvate dehydrogenase E1 alpha subunit] + ADP + H(+). Functionally, inhibits the mitochondrial pyruvate dehydrogenase complex by phosphorylation of the E1 alpha subunit (PDA1), thus contributing to the regulation of glucose metabolism. Also involved in telomere maintenance. In Saccharomyces cerevisiae (strain ATCC 204508 / S288c) (Baker's yeast), this protein is [Pyruvate dehydrogenase (acetyl-transferring)] kinase 1, mitochondrial.